Here is a 202-residue protein sequence, read N- to C-terminus: MNILNKLGIGSSRQTNMDPSPIAQVIDDEAPAPGNQFTQFGAGCFWSVELAYQRVPGVTQTEVGYSQGITHDPSYKDVCSGTTNHAEIVRVQYDPKECSYQSLLDLFWSKHDPTTLNRQGNDVGTQYRSGIYFYNPEQEKLARESLERHQQQVDRKVVTEILPAKKFYRAEEHHQQYLSKGGRFGLKQSTEKGCNDPIRCYG.

The interval 1 to 20 (MNILNKLGIGSSRQTNMDPS) is disordered. Ser-189 bears the Phosphoserine mark.

Belongs to the MsrA Met sulfoxide reductase family.

It localises to the cytoplasm. It is found in the cytosol. It carries out the reaction L-methionyl-[protein] + [thioredoxin]-disulfide + H2O = L-methionyl-(S)-S-oxide-[protein] + [thioredoxin]-dithiol. The catalysed reaction is [thioredoxin]-disulfide + L-methionine + H2O = L-methionine (S)-S-oxide + [thioredoxin]-dithiol. In terms of biological role, catalyzes the reduction of methionine sulfoxide (MetSO) to methionine in proteins. Plays a protective role against oxidative stress by restoring activity to proteins that have been inactivated by methionine oxidation. MSRA family specifically reduces the MetSO S-enantiomer. The protein is Peptide methionine sulfoxide reductase A1 (MSRA1) of Arabidopsis thaliana (Mouse-ear cress).